A 506-amino-acid chain; its full sequence is Anaerobic nitric oxide reductase transcription regulator NorR (506 aa).

D57 carries the post-translational modification 4-aspartylphosphate. The region spanning 187–416 (MIGLSPAMTQ…LEHAIHRAVV (230 aa)) is the Sigma-54 factor interaction domain. Residues 215-222 (GETGTGKE) and 278-287 (ADNGTLFLDE) contribute to the ATP site. Residues 481–500 (WAASARALETDVANLHRLAK) constitute a DNA-binding region (H-T-H motif).

The protein operates within nitrogen metabolism; nitric oxide reduction. Required for the expression of anaerobic nitric oxide (NO) reductase, acts as a transcriptional activator for at least the norVW operon. Activation also requires sigma-54. In Salmonella paratyphi C (strain RKS4594), this protein is Anaerobic nitric oxide reductase transcription regulator NorR.